The sequence spans 194 residues: dTTP/UTP pyrophosphatase (194 aa).

The Proton acceptor role is filled by Asp66.

It belongs to the Maf family. YhdE subfamily. A divalent metal cation serves as cofactor.

The protein localises to the cytoplasm. It carries out the reaction dTTP + H2O = dTMP + diphosphate + H(+). The enzyme catalyses UTP + H2O = UMP + diphosphate + H(+). Functionally, nucleoside triphosphate pyrophosphatase that hydrolyzes dTTP and UTP. May have a dual role in cell division arrest and in preventing the incorporation of modified nucleotides into cellular nucleic acids. This Anaeromyxobacter dehalogenans (strain 2CP-C) protein is dTTP/UTP pyrophosphatase.